The primary structure comprises 466 residues: MTFDSSPIAAIATAPGRGGIGVVRISGKDLSSVMRAVCGADKGSSLQARHATYLDFVNSDGSVIDQGLAIYFKAPHSYTGEDVLELQGHGGPVVLQMLLTRCLEAGADIGLRMAEPGEFTHRAFLNDKLDLAQAEGVIDLIEASTEAAAKSATQSLSGAFSKTIQELVDKITNLRMLVEATLDFPEEEIDFLEKSDARGQLTNIREALQRVFSQAAQGALLRDGLNIVLAGQPNVGKSSLLNALAGSDVAIVTPIAGTTRDKVIETIQIEGIPVNVIDTAGIRDAADAGDEVERIGIERTWAAVQTADVIVHMLDASRGPTRADEQITERFPANVPVMRVWNKIDLSGHRPAIDRMPDATHIYLSATGLLGMDLLRTELLHLVGWQQTGESLYLARERHLVALKSAHSHLEMAAQHAAHDNEATDPALDLFAEELRLAQERLSSITGEFTSDDLLGVIFSRFCIGK.

The (6S)-5-formyl-5,6,7,8-tetrahydrofolate site is built by Arg-24, Glu-85, and Lys-128. In terms of domain architecture, TrmE-type G spans 224–384 (GLNIVLAGQP…LRTELLHLVG (161 aa)). Asn-234 is a K(+) binding site. Residues 234-239 (NVGKSS), 253-259 (TPIAGTT), and 278-281 (DTAG) contribute to the GTP site. Ser-238 contributes to the Mg(2+) binding site. Thr-253, Ile-255, and Thr-258 together coordinate K(+). Thr-259 lines the Mg(2+) pocket. Lys-466 lines the (6S)-5-formyl-5,6,7,8-tetrahydrofolate pocket.

The protein belongs to the TRAFAC class TrmE-Era-EngA-EngB-Septin-like GTPase superfamily. TrmE GTPase family. In terms of assembly, homodimer. Heterotetramer of two MnmE and two MnmG subunits. K(+) serves as cofactor.

It localises to the cytoplasm. In terms of biological role, exhibits a very high intrinsic GTPase hydrolysis rate. Involved in the addition of a carboxymethylaminomethyl (cmnm) group at the wobble position (U34) of certain tRNAs, forming tRNA-cmnm(5)s(2)U34. This chain is tRNA modification GTPase MnmE, found in Herminiimonas arsenicoxydans.